We begin with the raw amino-acid sequence, 285 residues long: Elongation factor Ts (285 aa).

The tract at residues 82–85 is involved in Mg(2+) ion dislocation from EF-Tu; it reads TDFV.

It belongs to the EF-Ts family.

The protein resides in the cytoplasm. Its function is as follows. Associates with the EF-Tu.GDP complex and induces the exchange of GDP to GTP. It remains bound to the aminoacyl-tRNA.EF-Tu.GTP complex up to the GTP hydrolysis stage on the ribosome. This chain is Elongation factor Ts, found in Sodalis glossinidius (strain morsitans).